A 603-amino-acid polypeptide reads, in one-letter code: Prostaglandin G/H synthase 2 (603 aa).

The signal sequence occupies residues 1 to 17 (MLLPCALLAALLAAGHA). The 38-residue stretch at 18–55 (ANPCCSLPCQNRGVCMTTGFDRYECDCTRTGYYGENCT) folds into the EGF-like domain. Disulfide bonds link Cys21/Cys32, Cys22/Cys145, Cys26/Cys42, and Cys44/Cys54. Asn53 and Asn90 each carry an N-linked (GlcNAc...) asparagine glycan. Arg106 serves as a coordination point for substrate. N-linked (GlcNAc...) asparagine glycosylation occurs at Asn130. His193 serves as the catalytic Proton acceptor. Residue Tyr341 coordinates substrate. The active-site For cyclooxygenase activity is the Tyr371. Position 374 (His374) interacts with heme b. Cysteines 555 and 561 form a disulfide.

It belongs to the prostaglandin G/H synthase family. As to quaternary structure, homodimer. The cofactor is heme b.

It localises to the microsome membrane. It is found in the endoplasmic reticulum membrane. The enzyme catalyses (5Z,8Z,11Z,14Z)-eicosatetraenoate + AH2 + 2 O2 = prostaglandin H2 + A + H2O. The catalysed reaction is (9Z,12Z)-octadecadienoate + AH2 + O2 = (9R)-hydroxy-(10E,12Z)-octadecadienoate + A + H2O. It carries out the reaction (9Z,12Z)-octadecadienoate + AH2 + O2 = (9S)-hydroxy-(10E,12Z)-octadecadienoate + A + H2O. It catalyses the reaction (9Z,12Z)-octadecadienoate + AH2 + O2 = (13S)-hydroxy-(9Z,11E)-octadecadienoate + A + H2O. The enzyme catalyses (9Z,12Z)-octadecadienoate + AH2 + O2 = (13R)-hydroxy-(9Z,11E)-octadecadienoate + A + H2O. It participates in lipid metabolism; prostaglandin biosynthesis. Functionally, dual cyclooxygenase and peroxidase in the biosynthesis pathway of prostanoids, a class of C20 oxylipins mainly derived from arachidonate ((5Z,8Z,11Z,14Z)-eicosatetraenoate, AA, C20:4(n-6)), with a particular role in the inflammatory response. The cyclooxygenase activity oxygenates AA to the hydroperoxy endoperoxide prostaglandin G2 (PGG2), and the peroxidase activity reduces PGG2 to the hydroxy endoperoxide prostaglandin H2 (PGH2), the precursor of all 2-series prostaglandins and thromboxanes. This complex transformation is initiated by abstraction of hydrogen at carbon 13 (with S-stereochemistry), followed by insertion of molecular O2 to form the endoperoxide bridge between carbon 9 and 11 that defines prostaglandins. The insertion of a second molecule of O2 (bis-oxygenase activity) yields a hydroperoxy group in PGG2 that is then reduced to PGH2 by two electrons. Similarly catalyzes successive cyclooxygenation and peroxidation of dihomo-gamma-linoleate (DGLA, C20:3(n-6)) and eicosapentaenoate (EPA, C20:5(n-3)) to corresponding PGH1 and PGH3, the precursors of 1- and 3-series prostaglandins. In an alternative pathway of prostanoid biosynthesis, converts 2-arachidonoyl lysophopholipids to prostanoid lysophopholipids, which are then hydrolyzed by intracellular phospholipases to release free prostanoids. Metabolizes 2-arachidonoyl glycerol yielding the glyceryl ester of PGH2, a process that can contribute to pain response. Generates lipid mediators from n-3 and n-6 polyunsaturated fatty acids (PUFAs) via a lipoxygenase-type mechanism. Oxygenates PUFAs to hydroperoxy compounds and then reduces them to corresponding alcohols. Plays a role in the generation of resolution phase interaction products (resolvins) during both sterile and infectious inflammation. Metabolizes docosahexaenoate (DHA, C22:6(n-3)) to 17R-HDHA, a precursor of the D-series resolvins (RvDs). As a component of the biosynthetic pathway of E-series resolvins (RvEs), converts eicosapentaenoate (EPA, C20:5(n-3)) primarily to 18S-HEPE that is further metabolized by ALOX5 and LTA4H to generate 18S-RvE1 and 18S-RvE2. In vascular endothelial cells, converts docosapentaenoate (DPA, C22:5(n-3)) to 13R-HDPA, a precursor for 13-series resolvins (RvTs) shown to activate macrophage phagocytosis during bacterial infection. In activated leukocytes, contributes to oxygenation of hydroxyeicosatetraenoates (HETE) to diHETES (5,15-diHETE and 5,11-diHETE). Can also use linoleate (LA, (9Z,12Z)-octadecadienoate, C18:2(n-6)) as substrate and produce hydroxyoctadecadienoates (HODEs) in a regio- and stereospecific manner, being (9R)-HODE ((9R)-hydroxy-(10E,12Z)-octadecadienoate) and (13S)-HODE ((13S)-hydroxy-(9Z,11E)-octadecadienoate) its major products. During neuroinflammation, plays a role in neuronal secretion of specialized preresolving mediators (SPMs) 15R-lipoxin A4 that regulates phagocytic microglia. This chain is Prostaglandin G/H synthase 2 (PTGS2), found in Gallus gallus (Chicken).